The chain runs to 1003 residues: Methyl-CpG-binding domain protein 6 (1003 aa).

An MBD domain is found at 11-81; that stretch reads DRAGGPVATS…KVFNFDPLAP (71 aa). Positions 57–68 are required for interaction with ASXL1/2/3; it reads DGTCKCGLECPL. Disordered regions lie at residues 120–219, 238–664, and 683–1003; these read TCSH…PPPA, VPSD…PLLF, and ATLD…KLAP. 2 stretches are compositionally biased toward pro residues: residues 140–155 and 268–287; these read PGPP…PPTT and TPPP…PASQ. Low complexity-rich tracts occupy residues 297-308, 319-328, and 348-361; these read LPLVLGPLGGAP, LASSLLSAAA, and AQAP…SLRP. The span at 391 to 407 shows a compositional bias: pro residues; the sequence is APAPVPQPFSLPEPSQP. Residues 408–426 show a composition bias toward low complexity; it reads ILPSVLSLLGLPTPGPSHS. Positions 439–456 are enriched in pro residues; it reads LPPPPTLSSGSPPQPRHP. 2 stretches are compositionally biased toward low complexity: residues 460 to 498 and 531 to 548; these read SLPG…PSEG and GAGF…LSLG. Over residues 570–589 the composition is skewed to pro residues; it reads QPPPEPLLPPPGGPGPPLAP. Low complexity predominate over residues 590-602; sequence GEPEGPSLLVASL. The span at 603-617 shows a compositional bias: pro residues; sequence LPPPPSDLLPPPSAP. Over residues 618–633 the composition is skewed to low complexity; it reads PSNLLASFLPLLALGP. Over residues 635 to 649 the composition is skewed to gly residues; that stretch reads AGDGEGSAEGAGGPS. Residues 650–662 are compositionally biased toward low complexity; that stretch reads GEPFSGLGDLSPL. Residues 707–718 show a composition bias toward polar residues; that stretch reads TSSVTTATTDPG. 3 stretches are compositionally biased toward low complexity: residues 732–761, 768–778, and 788–798; these read PPQL…LPSL, LLSGQLGLQLL, and SEASSPLACLL. Over residues 805–817 the composition is skewed to pro residues; it reads PEQPEAPCLPPES. The segment covering 818–837 has biased composition (low complexity); that stretch reads PASALEPEPARPPLSALAPP. The span at 947-958 shows a compositional bias: basic residues; that stretch reads RKSRRGRRRKYN. A compositionally biased stretch (polar residues) spans 959–969; it reads PTRNSNSSRQD. Basic residues predominate over residues 989–1003; the sequence is RPGRPAKNKRRKLAP.

In terms of assembly, core component of the polycomb repressive deubiquitinase (PR-DUB) complex, at least composed of BAP1, one of ASXL1, ASXL2 or (probably) ASXL3, and one of MBD5 or MBD6. Distinct combinations of ASXL and MBD proteins may preferentially bind specific histone modification marks. The PR-DUB core associates with a number of accessory proteins, including FOXK1, FOXK2, KDM1B, HCFC1 and OGT; KDM1B specifically associates with ASXL2 PR-DUB complexes. Interacts (via MBD domain) with ASXL1, ASXL2 and ASXL3 (via PHD domain); the interaction is probably direct, mediates association with other PR-DUB complex core components.

It localises to the nucleus. The protein localises to the chromosome. Non-catalytic component of the polycomb repressive deubiquitinase (PR-DUB) complex, a complex that specifically mediates deubiquitination of histone H2A monoubiquitinated at 'Lys-120' (H2AK119ub1). Important for stability of PR-DUB components and stimulating its ubiquitinase activity. As part of the PR-DUB complex, associates with chromatin enriched in histone marks H3K4me1, H3K4me3, and H3K27Ac, but not in H3K27me3. MBD5 and MBD6 containing complexes associate with distinct chromatin regions enriched in genes involved in different pathways. Heterochromatin recruitment is not mediated by DNA methylation. The PR-DUB complex is an epigenetic regulator of gene expression, including genes involved in development, cell communication, signaling, cell proliferation and cell viability; may promote cancer cell growth. In Homo sapiens (Human), this protein is Methyl-CpG-binding domain protein 6 (MBD6).